The primary structure comprises 294 residues: Phosphoribosylaminoimidazole-succinocarboxamide synthase (294 aa).

This sequence belongs to the SAICAR synthetase family.

It carries out the reaction 5-amino-1-(5-phospho-D-ribosyl)imidazole-4-carboxylate + L-aspartate + ATP = (2S)-2-[5-amino-1-(5-phospho-beta-D-ribosyl)imidazole-4-carboxamido]succinate + ADP + phosphate + 2 H(+). It functions in the pathway purine metabolism; IMP biosynthesis via de novo pathway; 5-amino-1-(5-phospho-D-ribosyl)imidazole-4-carboxamide from 5-amino-1-(5-phospho-D-ribosyl)imidazole-4-carboxylate: step 1/2. The protein is Phosphoribosylaminoimidazole-succinocarboxamide synthase of Thermoplasma volcanium (strain ATCC 51530 / DSM 4299 / JCM 9571 / NBRC 15438 / GSS1).